The chain runs to 75 residues: uncharacterized protein (75 aa).

The chain crosses the membrane as a helical span at residues 49-69 (VDIVAVATTLPFIVAVICIVF).

Its subcellular location is the host membrane. This is an uncharacterized protein from Saccharolobus islandicus (Sulfolobus islandicus).